We begin with the raw amino-acid sequence, 368 residues long: tRNA-specific 2-thiouridylase MnmA (368 aa).

Residues 14–21 (AMSGGVDS) and L40 each bind ATP. The active-site Nucleophile is C108. C108 and C204 are joined by a disulfide. Residue G132 coordinates ATP. The interval 154-156 (KDQ) is interaction with tRNA. C204 acts as the Cysteine persulfide intermediate in catalysis.

This sequence belongs to the MnmA/TRMU family.

Its subcellular location is the cytoplasm. It catalyses the reaction S-sulfanyl-L-cysteinyl-[protein] + uridine(34) in tRNA + AH2 + ATP = 2-thiouridine(34) in tRNA + L-cysteinyl-[protein] + A + AMP + diphosphate + H(+). Its function is as follows. Catalyzes the 2-thiolation of uridine at the wobble position (U34) of tRNA, leading to the formation of s(2)U34. The protein is tRNA-specific 2-thiouridylase MnmA of Rickettsia canadensis (strain McKiel).